The following is a 249-amino-acid chain: Segregation and condensation protein A (249 aa).

It belongs to the ScpA family. As to quaternary structure, component of a cohesin-like complex composed of ScpA, ScpB and the Smc homodimer, in which ScpA and ScpB bind to the head domain of Smc. The presence of the three proteins is required for the association of the complex with DNA.

The protein resides in the cytoplasm. Participates in chromosomal partition during cell division. May act via the formation of a condensin-like complex containing Smc and ScpB that pull DNA away from mid-cell into both cell halves. In Clostridium acetobutylicum (strain ATCC 824 / DSM 792 / JCM 1419 / IAM 19013 / LMG 5710 / NBRC 13948 / NRRL B-527 / VKM B-1787 / 2291 / W), this protein is Segregation and condensation protein A.